Consider the following 1057-residue polypeptide: Carbamoyl phosphate synthase large chain (1057 aa).

The carboxyphosphate synthetic domain stretch occupies residues 1-401 (MPKRNDIKTI…SLLKAIRSLE (401 aa)). ATP contacts are provided by R129, R169, G175, G176, K208, I210, E215, G241, I242, H243, Q284, and E298. An ATP-grasp 1 domain is found at 133–327 (RTLMNDLNVP…IAKLAAKIAV (195 aa)). 3 residues coordinate Mg(2+): Q284, E298, and N300. Mn(2+) is bound by residues Q284, E298, and N300. Positions 402–546 (YGVHHLGLPN…YGTYETENES (145 aa)) are oligomerization domain. The carbamoyl phosphate synthetic domain stretch occupies residues 547-929 (IVTDKEKILV…ALFKGLTGSG (383 aa)). An ATP-grasp 2 domain is found at 671–861 (EALLRKINVP…MAQLAMRAII (191 aa)). ATP-binding residues include R707, R746, L748, E752, G777, V778, H779, S780, Q820, and E832. Q820, E832, and N834 together coordinate Mg(2+). Residues Q820, E832, and N834 each contribute to the Mn(2+) site. The MGS-like domain occupies 930–1057 (VEVKDHGTVL…ESMTFTMRQM (128 aa)). Residues 930–1057 (VEVKDHGTVL…ESMTFTMRQM (128 aa)) form an allosteric domain region.

It belongs to the CarB family. As to quaternary structure, composed of two chains; the small (or glutamine) chain promotes the hydrolysis of glutamine to ammonia, which is used by the large (or ammonia) chain to synthesize carbamoyl phosphate. Tetramer of heterodimers (alpha,beta)4. Mg(2+) serves as cofactor. The cofactor is Mn(2+).

The enzyme catalyses hydrogencarbonate + L-glutamine + 2 ATP + H2O = carbamoyl phosphate + L-glutamate + 2 ADP + phosphate + 2 H(+). The catalysed reaction is hydrogencarbonate + NH4(+) + 2 ATP = carbamoyl phosphate + 2 ADP + phosphate + 2 H(+). It functions in the pathway amino-acid biosynthesis; L-arginine biosynthesis; carbamoyl phosphate from bicarbonate: step 1/1. Its pathway is pyrimidine metabolism; UMP biosynthesis via de novo pathway; (S)-dihydroorotate from bicarbonate: step 1/3. In terms of biological role, large subunit of the glutamine-dependent carbamoyl phosphate synthetase (CPSase). CPSase catalyzes the formation of carbamoyl phosphate from the ammonia moiety of glutamine, carbonate, and phosphate donated by ATP, constituting the first step of 2 biosynthetic pathways, one leading to arginine and/or urea and the other to pyrimidine nucleotides. The large subunit (synthetase) binds the substrates ammonia (free or transferred from glutamine from the small subunit), hydrogencarbonate and ATP and carries out an ATP-coupled ligase reaction, activating hydrogencarbonate by forming carboxy phosphate which reacts with ammonia to form carbamoyl phosphate. This chain is Carbamoyl phosphate synthase large chain, found in Staphylococcus aureus (strain USA300 / TCH1516).